The sequence spans 440 residues: Acetylornithine deacetylase (440 aa).

Residue His101 participates in Zn(2+) binding. Asp103 is an active-site residue. Position 133 (Asp133) interacts with Zn(2+). Catalysis depends on Glu167, which acts as the Proton acceptor. Positions 168 and 412 each coordinate Zn(2+).

This sequence belongs to the peptidase M20A family. ArgE subfamily. In terms of assembly, homodimer. Zn(2+) serves as cofactor. The cofactor is Co(2+).

The catalysed reaction is N(2)-acetyl-L-ornithine + H2O = L-ornithine + acetate. It functions in the pathway amino-acid biosynthesis; L-arginine biosynthesis; L-ornithine from N(2)-acetyl-L-ornithine (linear): step 1/1. This is Acetylornithine deacetylase from Arabidopsis thaliana (Mouse-ear cress).